A 711-amino-acid chain; its full sequence is Early transcription factor 82 kDa subunit (711 aa).

It belongs to the poxviridae VETF large subunit family. In terms of assembly, heterodimer of a 70 kDa and a 82 kDa subunit. Part of the early transcription complex composed of ETF, RAP94, and the DNA-directed RNA polymerase.

Acts with RNA polymerase to initiate transcription from early gene promoters. Is recruited by the RPO-associated protein of 94 kDa (RAP94) to form the early transcription complex, which also contains the core RNA polymerase. ETF heterodimer binds to early gene promoters. This is Early transcription factor 82 kDa subunit (VETFL) from Oryctolagus cuniculus (Rabbit).